The chain runs to 631 residues: Acurin A biosynthesis cluster transcription regulator (631 aa).

The span at 1–11 shows a compositional bias: polar residues; the sequence is MSPNMSLTASH. Positions 1-28 are disordered; it reads MSPNMSLTASHPQQPQPTPQSKAQLTRQ. A DNA-binding region (zn(2)-C6 fungal-type) is located at residues 30-62; the sequence is CNRCHASKLKCLRPPGVTTSKSCIRCIKADTEC. 3 disordered regions span residues 64 to 141, 489 to 522, and 536 to 573; these read YDPP…PDNR, CSSS…HPAT, and HSSS…YPTP. Positions 88–99 are enriched in basic and acidic residues; sequence IEAREPEVTDPR. The segment covering 119–128 has biased composition (polar residues); sequence NGSLAPSSAA.

It is found in the nucleus. Transcription factor that positively regulates the expression of the cluster that mediates the biosynthesis of acurin A, a highly reduced polyketide coupled to a serine via a peptide bond. The polypeptide is Acurin A biosynthesis cluster transcription regulator (Aspergillus aculeatus (strain ATCC 16872 / CBS 172.66 / WB 5094)).